Consider the following 580-residue polypeptide: 9,13-epoxylabda-14-ene synthase, chloroplastic (580 aa).

A chloroplast-targeting transit peptide spans 1–32 (MSITFNLKIAPFSGPGIQRSKETFPATEIQIT). Mg(2+) contacts are provided by aspartate 322, aspartate 326, asparagine 466, threonine 470, and glutamate 474. Positions 322–326 (DDFFD) match the DDXXD motif motif.

It belongs to the terpene synthase family. Mg(2+) is required as a cofactor. Present in both leaves and flowers, with higher levels in leaves.

The protein resides in the plastid. Its subcellular location is the chloroplast. The catalysed reaction is peregrinol diphosphate = (13R)-9,13-epoxylabd-14-ene + diphosphate. The enzyme catalyses (+)-copalyl diphosphate = miltiradiene + diphosphate. It catalyses the reaction 8-hydroxycopalyl diphosphate = (13R)-manoyl oxide + diphosphate. Its pathway is secondary metabolite biosynthesis; terpenoid biosynthesis. Involved in the biosynthesis of labdane-type diterpenoid including marrubiin and other labdane-related furanoid diterpenoids with potential applications as anti-diabetics, analgesics or vasorelaxants. Terpene synthase the catalyzes the conversion of peregrinol diphosphate to 9,13(R)-epoxy-labd-14-ene, from (+)-copalyl diphosphate ((+)-CPP) to miltiradiene and from 8-hydroxycopalyl diphosphate (LPP, labda-13-en-8-ol diphosphate) to manoyl oxide. This is 9,13-epoxylabda-14-ene synthase, chloroplastic from Marrubium vulgare (White horehound).